The sequence spans 189 residues: Glutathione-dependent formaldehyde-activating enzyme (189 aa).

The 147-residue stretch at 20-166 (FAGGTLVCAC…LRTIGLEPYD (147 aa)) folds into the CENP-V/GFA domain. 7 residues coordinate Zn(2+): Cys27, Cys29, Cys48, Cys50, Cys53, Cys95, and Cys98.

It belongs to the Gfa family. Zn(2+) serves as cofactor.

It carries out the reaction S-(hydroxymethyl)glutathione = glutathione + formaldehyde. Its pathway is one-carbon metabolism; formaldehyde degradation; formate from formaldehyde (glutathione route): step 1/3. Functionally, catalyzes the condensation of formaldehyde and glutathione to S-hydroxymethylglutathione. In Mesorhizobium japonicum (strain LMG 29417 / CECT 9101 / MAFF 303099) (Mesorhizobium loti (strain MAFF 303099)), this protein is Glutathione-dependent formaldehyde-activating enzyme.